The sequence spans 128 residues: Probable prefoldin subunit 6 (128 aa).

Belongs to the prefoldin subunit beta family. As to quaternary structure, heterohexamer of two PFD-alpha type and four PFD-beta type subunits.

Its subcellular location is the cytoplasm. Its function is as follows. Binds specifically to cytosolic chaperonin (c-CPN) and transfers target proteins to it. Binds to nascent polypeptide chain and promotes folding in an environment in which there are many competing pathways for nonnative proteins. Required for positioning of the mitotic spindle. The chain is Probable prefoldin subunit 6 from Caenorhabditis briggsae.